Reading from the N-terminus, the 372-residue chain is Delta-type opioid receptor (372 aa).

The Extracellular portion of the chain corresponds to 1 to 47; that stretch reads MEPAPSAGAELQPPLFANASDAYPSACPSAGANASGPPGARSASSLA. N-linked (GlcNAc...) asparagine glycans are attached at residues Asn-18 and Asn-33. Residues 48–75 traverse the membrane as a helical segment; the sequence is LAIAITALYSAVCAVGLLGNVLVMFGIV. The Cytoplasmic portion of the chain corresponds to 76–85; sequence RYTKMKTATN. The helical transmembrane segment at 86–110 threads the bilayer; the sequence is IYIFNLALADALATSTLPFQSAKYL. Topologically, residues 111 to 122 are extracellular; sequence METWPFGELLCK. A disulfide bridge links Cys-121 with Cys-198. Residues 123-144 traverse the membrane as a helical segment; that stretch reads AVLSIDYYNMFTSIFTLTMMSV. Over 145–163 the chain is Cytoplasmic; that stretch reads DRYIAVCHPVKALDFRTPA. The helical transmembrane segment at 164–186 threads the bilayer; it reads KAKLINICIWVLASGVGVPIMVM. Over 187 to 206 the chain is Extracellular; that stretch reads AVTRPRDGAVVCMLQFPSPS. The helical transmembrane segment at 207-238 threads the bilayer; that stretch reads WYWDTVTKICVFLFAFVVPILIITVCYGLMLL. Residues 239-261 lie on the Cytoplasmic side of the membrane; it reads RLRSVRLLSGSKEKDRSLRRITR. A helical membrane pass occupies residues 262–284; it reads MVLVVVGAFVVCWAPIHIFVIVW. Over 285–299 the chain is Extracellular; the sequence is TLVDIDRRDPLVVAA. Residues 300-321 form a helical membrane-spanning segment; it reads LHLCIALGYANSSLNPVLYAFL. Residues 322 to 372 are Cytoplasmic-facing; the sequence is DENFKRCFRQLCRKPCGRPDPSSFSRAREATARERVTACTPSDGPGGGAAA. Residue Cys-333 is the site of S-palmitoyl cysteine attachment. The segment at 340–372 is disordered; the sequence is PDPSSFSRAREATARERVTACTPSDGPGGGAAA. Positions 347–357 are enriched in basic and acidic residues; the sequence is RAREATARERV.

Belongs to the G-protein coupled receptor 1 family. As to quaternary structure, may form homooligomers. Forms a heterodimer with OPRM1. Interacts with GPRASP1. Interacts with RTP4; the interaction promotes cell surface localization of the OPRD1-OPRM1 heterodimer. N-glycosylated. In terms of processing, ubiquitinated. A basal ubiquitination seems not to be related to degradation. Ubiquitination is increased upon formation of OPRM1:OPRD1 oligomers leading to proteasomal degradation; the ubiquitination is diminished by RTP4. Detected in oocytes (at protein level). Detected in brain cortex, hypothalamus, hippocampus and olfactory bulb. Detected in oocytes.

Its subcellular location is the cell membrane. Its function is as follows. G-protein coupled receptor that functions as a receptor for endogenous enkephalins and for a subset of other opioids. Ligand binding causes a conformation change that triggers signaling via guanine nucleotide-binding proteins (G proteins) and modulates the activity of down-stream effectors, such as adenylate cyclase. Signaling leads to the inhibition of adenylate cyclase activity. Inhibits neurotransmitter release by reducing calcium ion currents and increasing potassium ion conductance. Plays a role in the perception of pain and in opiate-mediated analgesia. Plays a role in developing analgesic tolerance to morphine. The sequence is that of Delta-type opioid receptor (OPRD1) from Homo sapiens (Human).